We begin with the raw amino-acid sequence, 233 residues long: DNA-directed RNA polymerase V subunit 5C (233 aa).

The protein belongs to the archaeal Rpo5/eukaryotic RPB5 RNA polymerase subunit family. In terms of assembly, component of the RNA polymerase V complex. Expressed in flower buds and siliques.

It is found in the nucleus. In terms of biological role, DNA-dependent RNA polymerase catalyzes the transcription of DNA into RNA using the four ribonucleoside triphosphates as substrates. Component of RNA polymerase V involved in RNA-directed DNA methylation-dependent (RdDM) silencing of endogenous repeated sequences, including transposable elements. In Arabidopsis thaliana (Mouse-ear cress), this protein is DNA-directed RNA polymerase V subunit 5C (NRPE5C).